Here is a 299-residue protein sequence, read N- to C-terminus: Bifunctional protein FolD 1 (299 aa).

NADP(+) is bound by residues 168–170 (GRS), Ser193, and Ile234.

This sequence belongs to the tetrahydrofolate dehydrogenase/cyclohydrolase family. As to quaternary structure, homodimer.

It carries out the reaction (6R)-5,10-methylene-5,6,7,8-tetrahydrofolate + NADP(+) = (6R)-5,10-methenyltetrahydrofolate + NADPH. The enzyme catalyses (6R)-5,10-methenyltetrahydrofolate + H2O = (6R)-10-formyltetrahydrofolate + H(+). Its pathway is one-carbon metabolism; tetrahydrofolate interconversion. Its function is as follows. Catalyzes the oxidation of 5,10-methylenetetrahydrofolate to 5,10-methenyltetrahydrofolate and then the hydrolysis of 5,10-methenyltetrahydrofolate to 10-formyltetrahydrofolate. The protein is Bifunctional protein FolD 1 of Rhizobium etli (strain ATCC 51251 / DSM 11541 / JCM 21823 / NBRC 15573 / CFN 42).